A 167-amino-acid polypeptide reads, in one-letter code: Endoribonuclease YbeY (167 aa).

Zn(2+) contacts are provided by histidine 131, histidine 135, and histidine 141.

It belongs to the endoribonuclease YbeY family. Zn(2+) serves as cofactor.

The protein resides in the cytoplasm. Functionally, single strand-specific metallo-endoribonuclease involved in late-stage 70S ribosome quality control and in maturation of the 3' terminus of the 16S rRNA. This chain is Endoribonuclease YbeY, found in Rickettsia africae (strain ESF-5).